The chain runs to 426 residues: Cuticle-degrading serine protease (426 aa).

Positions 1–21 (MLTNGLISLLAIAGLATNAFA) are cleaved as a signal peptide. A propeptide spanning residues 22–123 (GPIRKVSNAG…VEQDTVVTTY (102 aa)) is cleaved from the precursor. The Inhibitor I9 domain occupies 39–122 (KYIVVLKKGL…YVEQDTVVTT (84 aa)). A Peptidase S8 domain is found at 130-426 (TWGLDRISHE…TNHQVTIVAS (297 aa)). The Charge relay system role is filled by Asp-164. A glycan (N-linked (GlcNAc...) asparagine) is linked at Asn-178. Residue His-200 is the Charge relay system of the active site. N-linked (GlcNAc...) asparagine glycosylation is present at Asn-252. Residue Ser-353 is the Charge relay system of the active site.

The protein belongs to the peptidase S8 family.

It is found in the secreted. With respect to regulation, inhibited by PMSF, SSI, the peptide Phe-Val and by Phe, but not by EDTA. Its function is as follows. Hydrolyzes gelatin, casein, the chromogenic substrate azocoll and the cuticle of the nematode P.redivivus. Immobilizes P.redivivus. The polypeptide is Cuticle-degrading serine protease (Orbilia oligospora (Nematode-trapping fungus)).